Consider the following 277-residue polypeptide: Bleomycin hydrolase (277 aa).

Cysteine 53 is an active-site residue.

It belongs to the peptidase C1 family. In terms of assembly, homohexamer. Interacts with NUDT12 (via ANK repeats).

It localises to the cytoplasm. Its subcellular location is the cytoplasmic granule. It catalyses the reaction Inactivates bleomycin B2 (a cytotoxic glycometallopeptide) by hydrolysis of a carboxyamide bond of beta-aminoalanine, but also shows general aminopeptidase activity. The specificity varies somewhat with source, but amino acid arylamides of Met, Leu and Ala are preferred.. Its activity is regulated as follows. Strongly inhibited by leupeptin, puromycin, NEM, and divalent cations. The normal physiological role of BLM hydrolase is unknown, but it catalyzes the inactivation of the antitumor drug BLM (a glycopeptide) by hydrolyzing the carboxamide bond of its B-aminoalaninamide moiety thus protecting normal and malignant cells from BLM toxicity. This Oryctolagus cuniculus (Rabbit) protein is Bleomycin hydrolase (BLMH).